A 469-amino-acid chain; its full sequence is Argininosuccinate lyase (469 aa).

Belongs to the lyase 1 family. Argininosuccinate lyase subfamily.

It is found in the cytoplasm. The enzyme catalyses 2-(N(omega)-L-arginino)succinate = fumarate + L-arginine. It participates in amino-acid biosynthesis; L-arginine biosynthesis; L-arginine from L-ornithine and carbamoyl phosphate: step 3/3. The protein is Argininosuccinate lyase of Burkholderia cenocepacia (strain ATCC BAA-245 / DSM 16553 / LMG 16656 / NCTC 13227 / J2315 / CF5610) (Burkholderia cepacia (strain J2315)).